Reading from the N-terminus, the 100-residue chain is Small ribosomal subunit protein uS14c (100 aa).

It belongs to the universal ribosomal protein uS14 family. Part of the 30S ribosomal subunit.

The protein localises to the plastid. It localises to the chloroplast. Its function is as follows. Binds 16S rRNA, required for the assembly of 30S particles. This is Small ribosomal subunit protein uS14c from Tupiella akineta (Green alga).